The sequence spans 747 residues: Polyribonucleotide nucleotidyltransferase (747 aa).

Mg(2+) is bound by residues aspartate 487 and aspartate 493. In terms of domain architecture, KH spans 554-613 (PSTTTIKIDKDKIRDIIGPGGKIIKEICETSGAKIDISDDGTVSVYAADRDKLKIASDKI). One can recognise an S1 motif domain in the interval 623–691 (GEIFNGTVTK…NKGKAKLTIK (69 aa)). Residues 694 to 716 (DKDKSLNNPKPQNSINNAKENSE) form a disordered region. Positions 699 to 712 (LNNPKPQNSINNAK) are enriched in polar residues.

This sequence belongs to the polyribonucleotide nucleotidyltransferase family. Requires Mg(2+) as cofactor.

Its subcellular location is the cytoplasm. It catalyses the reaction RNA(n+1) + phosphate = RNA(n) + a ribonucleoside 5'-diphosphate. Functionally, involved in mRNA degradation. Catalyzes the phosphorolysis of single-stranded polyribonucleotides processively in the 3'- to 5'-direction. This is Polyribonucleotide nucleotidyltransferase from Rickettsia canadensis (strain McKiel).